The following is a 400-amino-acid chain: Multiphosphoryl transfer protein (400 aa).

In terms of domain architecture, PTS EIIA type-2 spans 2–142 (LELTTQDIQL…QQIIAIIKGE (141 aa)). The active-site Tele-phosphohistidine intermediate; for EIIA activity is the histidine 62. The residue at position 62 (histidine 62) is a Phosphohistidine; by HPr. Positions 310-400 (AHTATFRIKN…VAINAGLGEG (91 aa)) constitute an HPr domain. Histidine 324 (pros-phosphohistidine intermediate; for HPr activity) is an active-site residue. Phosphohistidine; by EI is present on histidine 324.

It localises to the cytoplasm. In terms of biological role, the phosphoenolpyruvate-dependent sugar phosphotransferase system (sugar PTS), a major carbohydrate active transport system, catalyzes the phosphorylation of incoming sugar substrates concomitantly with their translocation across the cell membrane. The enzyme II FruAB PTS system is involved in fructose transport. The polypeptide is Multiphosphoryl transfer protein (Vibrio cholerae serotype O1 (strain ATCC 39315 / El Tor Inaba N16961)).